A 179-amino-acid polypeptide reads, in one-letter code: Large ribosomal subunit protein uL5 (179 aa).

It belongs to the universal ribosomal protein uL5 family. Part of the 50S ribosomal subunit; part of the 5S rRNA/L5/L18/L25 subcomplex. Contacts the 5S rRNA and the P site tRNA. Forms a bridge to the 30S subunit in the 70S ribosome.

In terms of biological role, this is one of the proteins that bind and probably mediate the attachment of the 5S RNA into the large ribosomal subunit, where it forms part of the central protuberance. In the 70S ribosome it contacts protein S13 of the 30S subunit (bridge B1b), connecting the 2 subunits; this bridge is implicated in subunit movement. Contacts the P site tRNA; the 5S rRNA and some of its associated proteins might help stabilize positioning of ribosome-bound tRNAs. In Rickettsia felis (strain ATCC VR-1525 / URRWXCal2) (Rickettsia azadi), this protein is Large ribosomal subunit protein uL5.